Reading from the N-terminus, the 399-residue chain is Succinate--CoA ligase [ADP-forming] subunit beta (399 aa).

Positions 9–254 (KAVLAEFGAP…ESEEDPKEIE (246 aa)) constitute an ATP-grasp domain. Residues K46, 53–55 (GRG), E109, A112, and E117 contribute to the ATP site. Mg(2+)-binding residues include N209 and D223. Substrate-binding positions include N274 and 331 to 333 (GIM).

The protein belongs to the succinate/malate CoA ligase beta subunit family. Heterotetramer of two alpha and two beta subunits. Mg(2+) serves as cofactor.

The catalysed reaction is succinate + ATP + CoA = succinyl-CoA + ADP + phosphate. The enzyme catalyses GTP + succinate + CoA = succinyl-CoA + GDP + phosphate. The protein operates within carbohydrate metabolism; tricarboxylic acid cycle; succinate from succinyl-CoA (ligase route): step 1/1. Succinyl-CoA synthetase functions in the citric acid cycle (TCA), coupling the hydrolysis of succinyl-CoA to the synthesis of either ATP or GTP and thus represents the only step of substrate-level phosphorylation in the TCA. The beta subunit provides nucleotide specificity of the enzyme and binds the substrate succinate, while the binding sites for coenzyme A and phosphate are found in the alpha subunit. This Caulobacter vibrioides (strain NA1000 / CB15N) (Caulobacter crescentus) protein is Succinate--CoA ligase [ADP-forming] subunit beta.